The primary structure comprises 305 residues: MTHESDDPSLDWLEAELEDSLDEDFEIEFSEPMLSMEIRRIYKDQRPDLLDRQVYFRNLLRLQAELIKLQDWVQHTNSKVLIIMEGRDAAGKGGVIKRITQRLNPRIARVVALPAPSRREQSQWYFQRYVPYLPSGGEMVLFDRSWYNRAGVERVMGFATEDQVEQFFQDVPEFERMLVRSGIILLKYWFSITDEEQQLRFLMRVHDPMKQWKLSPMDLESRIRWEQYTKAKEQMFSRTNIPEAPWYIVEGNDKKRERLNCIEHLLSKIPYEDIPHEKVTLPDRRYNPDYERQVLPDELYVPKVY.

It belongs to the polyphosphate kinase 2 (PPK2) family. Class I subfamily.

It carries out the reaction [phosphate](n) + ATP = [phosphate](n+1) + ADP. It catalyses the reaction [phosphate](n) + CTP = [phosphate](n+1) + CDP. The catalysed reaction is [phosphate](n) + GTP = [phosphate](n+1) + GDP. The enzyme catalyses [phosphate](n) + UTP = [phosphate](n+1) + UDP. With respect to regulation, shows little dependence on metals. Uses inorganic polyphosphate (polyP) as a donor to convert NDP to NTP. PolyP hydrolysis is slightly faster with GDP, but it can also use ADP, CDP and UDP. The polypeptide is NDP-polyphosphate phosphotransferase 1 (Ruegeria pomeroyi (strain ATCC 700808 / DSM 15171 / DSS-3) (Silicibacter pomeroyi)).